A 310-amino-acid chain; its full sequence is Oxygen-dependent coproporphyrinogen-III oxidase (310 aa).

Substrate is bound at residue Ser92. A divalent metal cation-binding residues include His96 and His106. Residue His106 is the Proton donor of the active site. Residue 108–110 (NVR) participates in substrate binding. The a divalent metal cation site is built by His145 and His175. The important for dimerization stretch occupies residues 240-275 (YVEFNLIWDRGTLFGLQSGGRTESILMSMPPLARWE). A substrate-binding site is contributed by 258-260 (GGR).

Belongs to the aerobic coproporphyrinogen-III oxidase family. Homodimer. A divalent metal cation serves as cofactor.

It localises to the cytoplasm. The catalysed reaction is coproporphyrinogen III + O2 + 2 H(+) = protoporphyrinogen IX + 2 CO2 + 2 H2O. Its pathway is porphyrin-containing compound metabolism; protoporphyrin-IX biosynthesis; protoporphyrinogen-IX from coproporphyrinogen-III (O2 route): step 1/1. Involved in the heme biosynthesis. Catalyzes the aerobic oxidative decarboxylation of propionate groups of rings A and B of coproporphyrinogen-III to yield the vinyl groups in protoporphyrinogen-IX. This Pectobacterium carotovorum subsp. carotovorum (strain PC1) protein is Oxygen-dependent coproporphyrinogen-III oxidase.